The primary structure comprises 150 residues: Allograft inflammatory factor 1-like (150 aa).

Position 2 is an N-acetylserine (Ser2). A Phosphoserine modification is found at Ser2. The EF-hand 1 domain maps to 47 to 82 (EKLAAFKEKYMEFDLNNEGEIDLMSLKRMMEKLGVP). Ca(2+)-binding residues include Asp60, Asn62, Glu64, and Glu66. One can recognise an EF-hand 2; degenerate domain in the interval 83-117 (KTHLEMKKMISEVTGGVSDTISYRDFVNMMLGKRS). Positions 129–150 (KANESSPKPAGPPPERDIASLP) are disordered. The residue at position 134 (Ser134) is a Phosphoserine.

Homodimer (Potential). Monomer.

The protein localises to the cytoplasm. The protein resides in the cytoskeleton. Its subcellular location is the cell projection. It is found in the ruffle membrane. Functionally, actin-binding protein that promotes actin bundling. May neither bind calcium nor depend on calcium for function. The polypeptide is Allograft inflammatory factor 1-like (Aif1l) (Mus musculus (Mouse)).